We begin with the raw amino-acid sequence, 247 residues long: Cell division protein ZapD (247 aa).

It belongs to the ZapD family. As to quaternary structure, interacts with FtsZ.

The protein resides in the cytoplasm. Its function is as follows. Cell division factor that enhances FtsZ-ring assembly. Directly interacts with FtsZ and promotes bundling of FtsZ protofilaments, with a reduction in FtsZ GTPase activity. In Shigella dysenteriae serotype 1 (strain Sd197), this protein is Cell division protein ZapD.